Consider the following 789-residue polypeptide: Cadherin-6 (789 aa).

Residues 1–18 (MRTYRYFLLLFWVGQPYP) form the signal peptide. Positions 19–53 (TFSNPLSKRTSGFPAKRRALELSANSRNELSRSKR) are excised as a propeptide. 5 consecutive Cadherin domains span residues 54-159 (SWMW…EPIF), 160-268 (TKDV…PPRF), 269-383 (PQST…PPVF), 384-486 (SKPA…DNAP), and 487-608 (EFAE…LIHP). The Extracellular portion of the chain corresponds to 54 to 615 (SWMWNQFFLL…IHPTGLSTGA (562 aa)). The N-linked (GlcNAc...) asparagine glycan is linked to Asn255. The segment at 259–288 (TDVNDNPPRFPQSTYQFKTPESSPPGTPIG) is disordered. Polar residues predominate over residues 269-279 (PQSTYQFKTPE). Residues Asn399, Asn437, Asn455, and Asn536 are each glycosylated (N-linked (GlcNAc...) asparagine). Residues 616–636 (LVAILLCIVILLVTVVLFAAL) form a helical membrane-spanning segment. Topologically, residues 637–789 (RRQRKKEPLI…YGGMDSDKDS (153 aa)) are cytoplasmic. Residues Ser785 and Ser789 each carry the phosphoserine modification.

Highly expressed in kidney and brain.

It localises to the cell membrane. Functionally, cadherins are calcium-dependent cell adhesion proteins. They preferentially interact with themselves in a homophilic manner in connecting cells; cadherins may thus contribute to the sorting of heterogeneous cell types. This is Cadherin-6 (Cdh6) from Rattus norvegicus (Rat).